The following is a 354-amino-acid chain: 3-dehydroquinate synthase (354 aa).

Residues 100 to 104 (GATGD), 124 to 125 (TT), Lys-136, Lys-145, and 163 to 166 (FLKT) each bind NAD(+). 3 residues coordinate Zn(2+): Glu-178, His-242, and His-256.

The protein belongs to the sugar phosphate cyclases superfamily. Dehydroquinate synthase family. NAD(+) serves as cofactor. It depends on Co(2+) as a cofactor. Zn(2+) is required as a cofactor.

The protein localises to the cytoplasm. The enzyme catalyses 7-phospho-2-dehydro-3-deoxy-D-arabino-heptonate = 3-dehydroquinate + phosphate. It participates in metabolic intermediate biosynthesis; chorismate biosynthesis; chorismate from D-erythrose 4-phosphate and phosphoenolpyruvate: step 2/7. In terms of biological role, catalyzes the conversion of 3-deoxy-D-arabino-heptulosonate 7-phosphate (DAHP) to dehydroquinate (DHQ). This chain is 3-dehydroquinate synthase, found in Staphylococcus aureus (strain Mu50 / ATCC 700699).